The chain runs to 410 residues: PHAF1 protein At3g51130 (410 aa).

Belongs to the PHAF1 family.

This Arabidopsis thaliana (Mouse-ear cress) protein is PHAF1 protein At3g51130.